Here is a 1171-residue protein sequence, read N- to C-terminus: ATP-dependent helicase/deoxyribonuclease subunit B (1171 aa).

A UvrD-like helicase ATP-binding domain is found at 1-390 (MSLRFVIGRA…HPLVECIRSA (390 aa)). Residue 8–15 (GRAGSGKS) participates in ATP binding. The 307-residue stretch at 281–587 (MEQPRFHSPA…QFANIPPSLD (307 aa)) folds into the UvrD-like helicase C-terminal domain. Residues Cys-805, Cys-1129, Cys-1132, and Cys-1138 each coordinate [4Fe-4S] cluster.

This sequence belongs to the helicase family. AddB/RexB type 1 subfamily. In terms of assembly, heterodimer of AddA and AddB. Requires Mg(2+) as cofactor. [4Fe-4S] cluster is required as a cofactor.

Its function is as follows. The heterodimer acts as both an ATP-dependent DNA helicase and an ATP-dependent, dual-direction single-stranded exonuclease. Recognizes the chi site generating a DNA molecule suitable for the initiation of homologous recombination. The AddB subunit has 5' -&gt; 3' nuclease activity but not helicase activity. The polypeptide is ATP-dependent helicase/deoxyribonuclease subunit B (Bacillus cereus (strain ATCC 14579 / DSM 31 / CCUG 7414 / JCM 2152 / NBRC 15305 / NCIMB 9373 / NCTC 2599 / NRRL B-3711)).